The primary structure comprises 677 residues: Beta-galactosidase BgaA (677 aa).

R112 contributes to the substrate binding site. C116 contributes to the Zn(2+) binding site. Residue N150 coordinates substrate. E151 (proton donor) is an active-site residue. Residues C156, C158, and C161 each contribute to the Zn(2+) site. E309 (nucleophile) is an active-site residue. Substrate contacts are provided by residues W317 and 357–360 (EKYH).

Belongs to the glycosyl hydrolase 42 family. As to quaternary structure, dimer.

The enzyme catalyses Hydrolysis of terminal non-reducing beta-D-galactose residues in beta-D-galactosides.. Its activity is regulated as follows. No activity is lost during treatment with 20 or 100 mM EDTA in Z buffer for 3 hours at 0 degrees Celsius, nor is activity greatly stimulated by the addition of cations. Inhibited by 1 mM zinc and 1 mM copper, the levels of activity decrease to 10% of the untreated control. Nickel, cobalt and manganese at concentrations of 10 mM decrease enzyme activity to either 40% (for nickel and cobalt) or 60% (for manganese) of the activity in untreated controls. No change in enzyme activity in the presence of calcium and magnesium at concentrations up to 50 mM. EDTA-treated enzyme exhibits a slight increase in relative specific activity when it is assayed in the presence of 50 mM NaCl or 50 mM KCl, it does not exhibit enhanced activity at concentrations greater than 250 mM. Maintains between 20 and 40% of activity in the presence of 4 M NaCl or 4 M KCl, and it is more active in the presence of KCl than in the presence of NaCl. Retains 50% of activity in the presence of 3 M KCl or 2.5 M NaCl. In terms of biological role, hydrolyzes o-nitrophenyl-beta-D-galactopyranoside (ONPG), p-nitrophenyl-beta-D-galactopyranoside (PNPG), 5-bromo-4-chloro-3-indoyl-beta-D-galactosde (X-gal), o-nitrophenyl-beta-D-fucopyranoside (ONPF) and p-nitrophenyl-beta-D-fucopyranoside (PNPF) with greatest activity towards ONPG and PNPG and low levels of activity with ONPF and PNPF. Detectable, but very low levels of activity towards p-nitrophenyl-beta-lactose (PNPL), p-nitrophenyl-beta-cellobiose (PNPC), p-nitrophenyl-alpha-galactopyranoside (PNP-alpha-G), and p-nitrophenyl-beta-xylopyranoside (PNPX). The polypeptide is Beta-galactosidase BgaA (Planococcus sp. (strain 'SOS Orange')).